Consider the following 904-residue polypeptide: Nitrate reductase [NADH] 2 (904 aa).

Composition is skewed to polar residues over residues 1–10 and 35–50; these read MAASVENRQF and PSPN…NSTI. The segment at 1 to 65 is disordered; it reads MAASVENRQF…SSEDDDDDDE (65 aa). The segment covering 56 to 65 has biased composition (acidic residues); that stretch reads SSEDDDDDDE. Mo-molybdopterin is bound at residue Cys-183. A Cytochrome b5 heme-binding domain is found at 531–606; that stretch reads SKMYSMSEVR…LEDFRIGELI (76 aa). The heme site is built by His-566 and His-589. One can recognise an FAD-binding FR-type domain in the interval 647–759; the sequence is REKIPCKLID…KGPLGHIEYQ (113 aa). FAD-binding positions include 699–702, 716–720, Phe-721, Phe-728, 733–735, and Thr-786; these read RAYT, VVKIY, and QMS.

It belongs to the nitrate reductase family. Homodimer. The cofactor is FAD. It depends on heme as a cofactor. Mo-molybdopterin is required as a cofactor.

It carries out the reaction nitrite + NAD(+) + H2O = nitrate + NADH + H(+). Regulated by the nitrogen source and controlled by the circadian rhythm. Its function is as follows. Nitrate reductase is a key enzyme involved in the first step of nitrate assimilation in plants, fungi and bacteria. The chain is Nitrate reductase [NADH] 2 (NIA2) from Nicotiana tabacum (Common tobacco).